A 131-amino-acid polypeptide reads, in one-letter code: Small ribosomal subunit protein uS8 (131 aa).

The protein belongs to the universal ribosomal protein uS8 family. In terms of assembly, part of the 30S ribosomal subunit. Contacts proteins S5 and S12.

Functionally, one of the primary rRNA binding proteins, it binds directly to 16S rRNA central domain where it helps coordinate assembly of the platform of the 30S subunit. The sequence is that of Small ribosomal subunit protein uS8 from Helicobacter acinonychis (strain Sheeba).